A 149-amino-acid polypeptide reads, in one-letter code: Nucleoside diphosphate kinase 1 (149 aa).

6 residues coordinate ATP: Lys-10, Phe-58, Arg-86, Thr-92, Arg-103, and Asn-113. His-116 (pros-phosphohistidine intermediate) is an active-site residue.

It belongs to the NDK family. Requires Mg(2+) as cofactor.

The catalysed reaction is a 2'-deoxyribonucleoside 5'-diphosphate + ATP = a 2'-deoxyribonucleoside 5'-triphosphate + ADP. It carries out the reaction a ribonucleoside 5'-diphosphate + ATP = a ribonucleoside 5'-triphosphate + ADP. Functionally, major role in the synthesis of nucleoside triphosphates other than ATP. The ATP gamma phosphate is transferred to the NDP beta phosphate via a ping-pong mechanism, using a phosphorylated active-site intermediate. This NDK is microtubule-associated. In Pisum sativum (Garden pea), this protein is Nucleoside diphosphate kinase 1 (NDPK1).